Here is a 294-residue protein sequence, read N- to C-terminus: 4-hydroxy-tetrahydrodipicolinate synthase (294 aa).

Pyruvate is bound at residue threonine 45. Tyrosine 133 (proton donor/acceptor) is an active-site residue. Lysine 161 (schiff-base intermediate with substrate) is an active-site residue. Isoleucine 203 is a pyruvate binding site.

It belongs to the DapA family. In terms of assembly, homotetramer; dimer of dimers.

It is found in the cytoplasm. It catalyses the reaction L-aspartate 4-semialdehyde + pyruvate = (2S,4S)-4-hydroxy-2,3,4,5-tetrahydrodipicolinate + H2O + H(+). The protein operates within amino-acid biosynthesis; L-lysine biosynthesis via DAP pathway; (S)-tetrahydrodipicolinate from L-aspartate: step 3/4. Its function is as follows. Catalyzes the condensation of (S)-aspartate-beta-semialdehyde [(S)-ASA] and pyruvate to 4-hydroxy-tetrahydrodipicolinate (HTPA). This is 4-hydroxy-tetrahydrodipicolinate synthase from Shewanella pealeana (strain ATCC 700345 / ANG-SQ1).